The chain runs to 166 residues: 2S seed storage protein 4 (166 aa).

The N-terminal stretch at 1–21 is a signal peptide; that stretch reads MANKLFLVCAALALCFILTNA. Propeptides lie at residues 22–37 and 73–88; these read SVYR…DASN and GPSL…DIEN.

Belongs to the 2S seed storage albumins family. As to quaternary structure, the mature protein consists of a small and a large chain linked by disulfide bonds.

Its function is as follows. This is a 2S seed storage protein. The chain is 2S seed storage protein 4 (AT2S4) from Arabidopsis thaliana (Mouse-ear cress).